A 345-amino-acid polypeptide reads, in one-letter code: Phosphoribosylformylglycinamidine cyclo-ligase (345 aa).

The protein belongs to the AIR synthase family.

It localises to the cytoplasm. The catalysed reaction is 2-formamido-N(1)-(5-O-phospho-beta-D-ribosyl)acetamidine + ATP = 5-amino-1-(5-phospho-beta-D-ribosyl)imidazole + ADP + phosphate + H(+). It functions in the pathway purine metabolism; IMP biosynthesis via de novo pathway; 5-amino-1-(5-phospho-D-ribosyl)imidazole from N(2)-formyl-N(1)-(5-phospho-D-ribosyl)glycinamide: step 2/2. The polypeptide is Phosphoribosylformylglycinamidine cyclo-ligase (Escherichia coli (strain K12 / MC4100 / BW2952)).